A 254-amino-acid chain; its full sequence is Inner membrane protein YabI (254 aa).

Topologically, residues 1 to 7 (MQALLEH) are periplasmic. Transmembrane regions (helical) follow at residues 8-28 (FITQ…FLES) and 29-49 (LALV…GALI). The Periplasmic segment spans residues 50–58 (GSGELSFWH). The chain crosses the membrane as a helical span at residues 59–79 (AWLAGIIGCLMGDWISFWLGW). Over 80–144 (RFKKPLHRWS…LPVAKFITPN (65 aa)) the chain is Cytoplasmic. The helical transmembrane segment at 145 to 165 (IIGCLLWPPFYFLPGILAGAA) threads the bilayer. Residues 166-178 (IDIPAGMQSGEFK) are Periplasmic-facing. The chain crosses the membrane as a helical span at residues 179–199 (WLLLATAVFLWVGGWLCWRLW). Over 200 to 215 (RSGKATDRLSHYLSRG) the chain is Cytoplasmic. Residues 216–236 (RLLWLTPLISAIGVVALVVLI) traverse the membrane as a helical segment. Residues 237–254 (RHPLMPVYIDILRKVVGV) lie on the Periplasmic side of the membrane.

The protein belongs to the DedA family.

Its subcellular location is the cell inner membrane. In Escherichia coli (strain K12), this protein is Inner membrane protein YabI (yabI).